Here is a 149-residue protein sequence, read N- to C-terminus: Transcriptional repressor NrdR (149 aa).

The segment at 3–33 (CPFCSSEDTKVVDSRTTIDGSTKRRRECNNC) is a zinc-finger region. The ATP-cone domain maps to 48–138 (IYVVKKDNRR…VYKEFDDIKS (91 aa)).

The protein belongs to the NrdR family. Zn(2+) serves as cofactor.

In terms of biological role, negatively regulates transcription of bacterial ribonucleotide reductase nrd genes and operons by binding to NrdR-boxes. The protein is Transcriptional repressor NrdR of Fusobacterium nucleatum subsp. nucleatum (strain ATCC 25586 / DSM 15643 / BCRC 10681 / CIP 101130 / JCM 8532 / KCTC 2640 / LMG 13131 / VPI 4355).